The primary structure comprises 336 residues: UbiA prenyltransferase domain-containing protein 1 (336 aa).

Residues Met1–Ser22 are disordered. A compositionally biased stretch (low complexity) spans Ala7–Ser22. Helical transmembrane passes span Leu79–Val99, Val129–Phe149, Leu158–Leu178, Tyr180–Ala200, His201–Leu221, Leu254–Ala274, and Leu315–Leu335.

It belongs to the UbiA prenyltransferase family.

Its subcellular location is the endoplasmic reticulum membrane. It localises to the golgi apparatus membrane. The protein localises to the mitochondrion membrane. The catalysed reaction is menadiol + (2E,6E,10E)-geranylgeranyl diphosphate = menaquinol-4 + diphosphate. It catalyses the reaction all-trans-decaprenyl diphosphate + 4-hydroxybenzoate = 4-hydroxy-3-(all-trans-decaprenyl)benzoate + diphosphate. It functions in the pathway quinol/quinone metabolism; menaquinone biosynthesis. Its pathway is cofactor biosynthesis; ubiquinone biosynthesis. Prenyltransferase that mediates the formation of menaquinone-4 (MK-4) and coenzyme Q10. MK-4 is a vitamin K2 isoform required for endothelial cell development. Mediates the conversion of phylloquinone (PK) into MK-4, probably by cleaving the side chain of phylloquinone (PK) to release 2-methyl-1,4-naphthoquinone (menadione; K3) and then prenylating it with geranylgeranyl pyrophosphate (GGPP) to form MK-4. Also plays a role in cardiovascular development independently of MK-4 biosynthesis, by acting as a coenzyme Q10 biosynthetic enzyme: coenzyme Q10, also named ubiquinone, plays an important antioxidant role in the cardiovascular system. Mediates biosynthesis of coenzyme Q10 in the Golgi membrane, leading to protect cardiovascular tissues from nos3/eNOS-dependent oxidative stress. This Danio rerio (Zebrafish) protein is UbiA prenyltransferase domain-containing protein 1 (ubiad1).